A 296-amino-acid polypeptide reads, in one-letter code: tRNA pseudouridine synthase B (296 aa).

The active-site Nucleophile is D38.

It belongs to the pseudouridine synthase TruB family. Type 1 subfamily.

It catalyses the reaction uridine(55) in tRNA = pseudouridine(55) in tRNA. In terms of biological role, responsible for synthesis of pseudouridine from uracil-55 in the psi GC loop of transfer RNAs. The polypeptide is tRNA pseudouridine synthase B (Ehrlichia chaffeensis (strain ATCC CRL-10679 / Arkansas)).